The chain runs to 285 residues: Bifunctional protein FolD (285 aa).

Residues 166-168 (GAS) and Ile232 each bind NADP(+).

This sequence belongs to the tetrahydrofolate dehydrogenase/cyclohydrolase family. In terms of assembly, homodimer.

The catalysed reaction is (6R)-5,10-methylene-5,6,7,8-tetrahydrofolate + NADP(+) = (6R)-5,10-methenyltetrahydrofolate + NADPH. It carries out the reaction (6R)-5,10-methenyltetrahydrofolate + H2O = (6R)-10-formyltetrahydrofolate + H(+). The protein operates within one-carbon metabolism; tetrahydrofolate interconversion. Catalyzes the oxidation of 5,10-methylenetetrahydrofolate to 5,10-methenyltetrahydrofolate and then the hydrolysis of 5,10-methenyltetrahydrofolate to 10-formyltetrahydrofolate. The sequence is that of Bifunctional protein FolD from Vibrio atlanticus (strain LGP32) (Vibrio splendidus (strain Mel32)).